A 204-amino-acid chain; its full sequence is Putative 3-methyladenine DNA glycosylase (204 aa).

It belongs to the DNA glycosylase MPG family.

This Bacillus mycoides (strain KBAB4) (Bacillus weihenstephanensis) protein is Putative 3-methyladenine DNA glycosylase.